The following is a 345-amino-acid chain: Dihydroorotase (345 aa).

Zn(2+) contacts are provided by histidine 13 and histidine 15. Residues 15–17 and asparagine 41 contribute to the substrate site; that span reads HFR. Residues lysine 98, histidine 135, and histidine 173 each contribute to the Zn(2+) site. An N6-carboxylysine modification is found at lysine 98. Residue histidine 135 coordinates substrate. Leucine 218 contacts substrate. A Zn(2+)-binding site is contributed by aspartate 246. Aspartate 246 is a catalytic residue. The substrate site is built by histidine 250 and alanine 262.

It belongs to the metallo-dependent hydrolases superfamily. DHOase family. Class II DHOase subfamily. Homodimer. Zn(2+) serves as cofactor.

The enzyme catalyses (S)-dihydroorotate + H2O = N-carbamoyl-L-aspartate + H(+). It participates in pyrimidine metabolism; UMP biosynthesis via de novo pathway; (S)-dihydroorotate from bicarbonate: step 3/3. Functionally, catalyzes the reversible cyclization of carbamoyl aspartate to dihydroorotate. The polypeptide is Dihydroorotase (Shewanella halifaxensis (strain HAW-EB4)).